Here is a 567-residue protein sequence, read N- to C-terminus: uncharacterized protein (567 aa).

Residues 1-26 (MPSEKATTRHLPGAVETLSPRTGRRP) are disordered. A run of 6 helical transmembrane segments spans residues 57–77 (AILV…TVAF), 90–110 (VSFG…TYWL), 142–162 (VALA…IIYG), 173–193 (LFSM…LTEF), 221–241 (MLVW…TAIF), and 257–277 (VLIL…ILAW). Residues 278–329 (LTATPVRVVREALNRVEQGDLSGDLVVFDGTELGELQRGFNRMVEGLRERER) enclose the HAMP domain. The region spanning 361–485 (AVVFVDIVGS…EPVNEAARLC (125 aa)) is the Guanylate cyclase domain.

The protein belongs to the adenylyl cyclase class-3 family.

Its subcellular location is the cell membrane. This is an uncharacterized protein from Mycobacterium tuberculosis (strain ATCC 25618 / H37Rv).